A 225-amino-acid chain; its full sequence is Increased recombination centers protein 22 (225 aa).

The first 24 residues, 1-24 (MRFFMLIGFNLLTALSSFCAAISA), serve as a signal peptide directing secretion. At 25-169 (NNSDNVEHEQ…PTLFEIVSPP (145 aa)) the chain is on the lumenal side. Residues 170-190 (ISFFNPQFLSVQVIFLAIIGG) traverse the membrane as a helical segment. Residues 191–225 (VSYYYMKSKTNQRPSKKSATVKKVDESWLPETYKK) lie on the Cytoplasmic side of the membrane. Residues 203 to 225 (RPSKKSATVKKVDESWLPETYKK) are disordered. A compositionally biased stretch (basic and acidic residues) spans 212 to 225 (KKVDESWLPETYKK).

This sequence belongs to the IRC22 family.

Its subcellular location is the endoplasmic reticulum membrane. Its function is as follows. Is probably involved in a pathway contributing to genomic integrity. The polypeptide is Increased recombination centers protein 22 (IRC22) (Saccharomyces cerevisiae (strain AWRI1631) (Baker's yeast)).